The following is a 335-amino-acid chain: Deoxyhypusine hydroxylase (335 aa).

5 HEAT-like PBS-type repeats span residues 74–100, 107–133, 203–233, 241–267, and 274–301; these read LKHE…VLED, CRHE…LRDD, KRYR…LAEG, FRHE…TLSD, and VRHE…FVND. 4 residues coordinate Fe cation: His-76, Glu-77, His-109, and Glu-110. Fe cation contacts are provided by His-243, Glu-244, His-276, and Glu-277.

It belongs to the deoxyhypusine hydroxylase family. The cofactor is Fe(2+).

It localises to the cytoplasm. It is found in the nucleus. The enzyme catalyses [eIF5A protein]-deoxyhypusine + AH2 + O2 = [eIF5A protein]-hypusine + A + H2O. The protein operates within protein modification; eIF5A hypusination. In terms of biological role, catalyzes the hydroxylation of the N(6)-(4-aminobutyl)-L-lysine intermediate to form hypusine, an essential post-translational modification only found in mature eIF-5A factor. The sequence is that of Deoxyhypusine hydroxylase from Coccidioides immitis (strain RS) (Valley fever fungus).